We begin with the raw amino-acid sequence, 413 residues long: Probable alpha-tubulin polyglutamylase Ttll1 (413 aa).

The region spanning 2-370 (ASKKLKYKTD…DDWNDDSSKT (369 aa)) is the TTL domain. ATP-binding positions include 184-187 (SRYI), K197, and D199.

This sequence belongs to the tubulin polyglutamylase family.

It localises to the cytoplasm. The protein resides in the cytoskeleton. The protein localises to the cilium basal body. Its subcellular location is the contractile vacuole. Its function is as follows. Probable tubulin polyglutamylase with a strong preference for alpha-tubulin. Modifies alpha-tubulin, generating side chains of glutamate on the gamma-carboxyl groups of specific glutamate residues within the C-terminal tail of alpha-tubulin. The chain is Probable alpha-tubulin polyglutamylase Ttll1 (Ttll1) from Tetrahymena thermophila (strain SB210).